The primary structure comprises 379 residues: UDP-4-amino-4-deoxy-L-arabinose--oxoglutarate aminotransferase (379 aa).

K182 carries the N6-(pyridoxal phosphate)lysine modification.

The protein belongs to the DegT/DnrJ/EryC1 family. ArnB subfamily. As to quaternary structure, homodimer. Requires pyridoxal 5'-phosphate as cofactor.

It carries out the reaction UDP-4-amino-4-deoxy-beta-L-arabinose + 2-oxoglutarate = UDP-beta-L-threo-pentopyranos-4-ulose + L-glutamate. It functions in the pathway nucleotide-sugar biosynthesis; UDP-4-deoxy-4-formamido-beta-L-arabinose biosynthesis; UDP-4-deoxy-4-formamido-beta-L-arabinose from UDP-alpha-D-glucuronate: step 2/3. Its pathway is bacterial outer membrane biogenesis; lipopolysaccharide biosynthesis. In terms of biological role, catalyzes the conversion of UDP-4-keto-arabinose (UDP-Ara4O) to UDP-4-amino-4-deoxy-L-arabinose (UDP-L-Ara4N). The modified arabinose is attached to lipid A and is required for resistance to polymyxin and cationic antimicrobial peptides. In Sodalis glossinidius (strain morsitans), this protein is UDP-4-amino-4-deoxy-L-arabinose--oxoglutarate aminotransferase.